We begin with the raw amino-acid sequence, 1954 residues long: Chromodomain-helicase-DNA-binding protein 5 (1954 aa).

2 disordered regions span residues 1–134 (MRGP…PKSS) and 225–338 (PLAV…GDGY). 2 stretches are compositionally biased toward acidic residues: residues 17–37 (EEME…EAFD) and 72–90 (NDEL…ESEG). The segment covering 96–115 (NKKKKKKLKDKKEKKAKRKK) has biased composition (basic residues). Positions 227-237 (AVSPPQVPQPV) are enriched in pro residues. Residues 251-272 (GVRKKIKGSKDGKKKGKGKKTA) show a composition bias toward basic residues. Residues 291–301 (SEEDEREESDF) are compositionally biased toward acidic residues. The segment covering 321–330 (KKSKRRRKKK) has biased composition (basic residues). PHD-type zinc fingers lie at residues 343 to 390 (QDYC…CEKE) and 416 to 463 (MEFC…CTCP). The histone-binding stretch occupies residues 343–653 (QDYCEVCQQG…HRELMLGEDT (311 aa)). The region spanning 497 to 554 (LPPPKPLEGIPEREFFVKWAGLSYWHCSWVKELQLELYHTVMYRNYQRKNDMDEPPPF) is the Chromo 1 domain. The tract at residues 549–571 (DEPPPFDYGSGDEDGKSEKRKNK) is disordered. Basic and acidic residues predominate over residues 561-571 (EDGKSEKRKNK). In terms of domain architecture, Chromo 2 spans 592-653 (MMIHRILNHS…HRELMLGEDT (62 aa)). Positions 712 to 896 (RFSWAQGTDT…FHLLNFLTPE (185 aa)) constitute a Helicase ATP-binding domain. 725 to 732 (DEMGLGKT) is an ATP binding site. The DEAH box signature appears at 847–850 (DEAH). One can recognise a Helicase C-terminal domain in the interval 1028–1193 (LLQKMLKKLR…MTKQELDDIL (166 aa)). Disordered stretches follow at residues 1209-1253 (MSQG…EDSS), 1351-1411 (YNDA…LPPL), 1524-1564 (YSTP…APLG), 1597-1640 (AALD…REEV), and 1658-1696 (SRGD…KKED). Acidic residues-rich tracts occupy residues 1355 to 1366 (SQEDQEWQDELS) and 1376 to 1385 (SEDEDEDFEE). Position 1390 is an N5-methylglutamine (Q1390). A Phosphoserine modification is found at S1554. A compositionally biased stretch (low complexity) spans 1554 to 1564 (SPAHLLPAPLG). Basic and acidic residues-rich tracts occupy residues 1600–1627 (DRVE…ETEK) and 1658–1678 (SRGD…KEPI).

This sequence belongs to the SNF2/RAD54 helicase family. In terms of assembly, component of the nucleosome remodeling and deacetylase (NuRD) repressor complex, composed of core proteins MTA1, MTA2, MTA3, RBBP4, RBBP7, HDAC1, HDAC2, MBD2, MBD3, and peripherally associated proteins CDK2AP1, CDK2AP2, GATAD2A, GATAD2B, CHD3, CHD4 and CHD5. The exact stoichiometry of the NuRD complex is unknown, and some subunits such as MBD2 and MBD3, GATAD2A and GATAD2B, and CHD3, CHD4 and CHD5 define mutually exclusive NuRD complexes. Interacts with HDAC2. In terms of processing, methylated at Gln-1390 by N6AMT1. Preferentially expressed in total brain, fetal brain, and cerebellum. It is also moderately expressed in the adrenal gland and detected in testis.

It localises to the nucleus. The protein resides in the chromosome. The enzyme catalyses ATP + H2O = ADP + phosphate + H(+). Its function is as follows. ATP-dependent chromatin-remodeling factor that binds DNA through histones and regulates gene transcription. May specifically recognize and bind trimethylated 'Lys-27' (H3K27me3) and non-methylated 'Lys-4' of histone H3. Acts as a component of the histone deacetylase NuRD complex which participates in the remodeling of chromatin. Plays a role in the development of the nervous system by activating the expression of genes promoting neuron terminal differentiation. In parallel, it may also positively regulate the trimethylation of histone H3 at 'Lys-27' thereby specifically repressing genes that promote the differentiation into non-neuronal cell lineages. Regulates the expression of genes involved in cell proliferation and differentiation. Downstream activated genes may include CDKN2A that positively regulates the p53/TP53 pathway, which in turn, prevents cell proliferation. In spermatogenesis, it probably regulates histone hyperacetylation and the replacement of histones by transition proteins in chromatin, a crucial step in the condensation of spermatid chromatin and the production of functional spermatozoa. The polypeptide is Chromodomain-helicase-DNA-binding protein 5 (Homo sapiens (Human)).